The sequence spans 252 residues: Indole-3-glycerol phosphate synthase (252 aa).

It belongs to the TrpC family.

The enzyme catalyses 1-(2-carboxyphenylamino)-1-deoxy-D-ribulose 5-phosphate + H(+) = (1S,2R)-1-C-(indol-3-yl)glycerol 3-phosphate + CO2 + H2O. Its pathway is amino-acid biosynthesis; L-tryptophan biosynthesis; L-tryptophan from chorismate: step 4/5. In Listeria monocytogenes serovar 1/2a (strain ATCC BAA-679 / EGD-e), this protein is Indole-3-glycerol phosphate synthase.